Consider the following 426-residue polypeptide: Probable indole-3-pyruvate monooxygenase YUCCA8 (426 aa).

Residue 29-34 coordinates FAD; sequence GAGPSG. 199-204 is a binding site for NADP(+); the sequence is GCGNSG.

This sequence belongs to the FMO family. The cofactor is FAD. As to expression, expressed in root tips and in hydathodes. Expressed in root vasculature and quiescent center, but not in the meristematic zone of the root tip.

It catalyses the reaction indole-3-pyruvate + NADPH + O2 + H(+) = (indol-3-yl)acetate + CO2 + NADP(+) + H2O. Its pathway is plant hormone metabolism; auxin biosynthesis. Functionally, involved in auxin biosynthesis. Belongs to the set of redundant YUCCA genes probably responsible for auxin biosynthesis in roots. The polypeptide is Probable indole-3-pyruvate monooxygenase YUCCA8 (YUC8) (Arabidopsis thaliana (Mouse-ear cress)).